A 421-amino-acid chain; its full sequence is UDP-N-acetylglucosamine 1-carboxyvinyltransferase (421 aa).

Residue 22–23 (KN) participates in phosphoenolpyruvate binding. R91 contacts UDP-N-acetyl-alpha-D-glucosamine. The active-site Proton donor is the C115. A 2-(S-cysteinyl)pyruvic acid O-phosphothioketal modification is found at C115. Residues 120–124 (RPVDL), 160–163 (KVSV), D305, and I327 each bind UDP-N-acetyl-alpha-D-glucosamine.

This sequence belongs to the EPSP synthase family. MurA subfamily.

It localises to the cytoplasm. The enzyme catalyses phosphoenolpyruvate + UDP-N-acetyl-alpha-D-glucosamine = UDP-N-acetyl-3-O-(1-carboxyvinyl)-alpha-D-glucosamine + phosphate. It participates in cell wall biogenesis; peptidoglycan biosynthesis. Cell wall formation. Adds enolpyruvyl to UDP-N-acetylglucosamine. The sequence is that of UDP-N-acetylglucosamine 1-carboxyvinyltransferase from Photorhabdus laumondii subsp. laumondii (strain DSM 15139 / CIP 105565 / TT01) (Photorhabdus luminescens subsp. laumondii).